Reading from the N-terminus, the 184-residue chain is Glutathione-regulated potassium-efflux system ancillary protein KefG (184 aa).

Belongs to the NAD(P)H dehydrogenase (quinone) family. KefG subfamily. Interacts with KefB.

It localises to the cell inner membrane. The catalysed reaction is a quinone + NADH + H(+) = a quinol + NAD(+). It catalyses the reaction a quinone + NADPH + H(+) = a quinol + NADP(+). Its function is as follows. Regulatory subunit of a potassium efflux system that confers protection against electrophiles. Required for full activity of KefB. This Shigella dysenteriae serotype 1 (strain Sd197) protein is Glutathione-regulated potassium-efflux system ancillary protein KefG.